Consider the following 580-residue polypeptide: Zinc finger CCCH domain-containing protein 47 (580 aa).

ANK repeat units lie at residues 72–102 (EERT…DVNR) and 107–139 (ERVT…LVNS). 2 C3H1-type zinc fingers span residues 251–278 (PYTC…HGVF) and 286–310 (QYKT…HKRE). The disordered stretch occupies residues 421 to 451 (YVSSPSRNSQMGQNMNQHYPSSPVRQPPSQH).

As to expression, expressed in roots and anthers.

Its subcellular location is the nucleus. Involved in salt stress response. May positively modulate plant tolerance to salt stress. The polypeptide is Zinc finger CCCH domain-containing protein 47 (Arabidopsis thaliana (Mouse-ear cress)).